Here is a 506-residue protein sequence, read N- to C-terminus: ATP synthase subunit alpha, chloroplastic (506 aa).

170-177 serves as a coordination point for ATP; sequence GDRQTGKT.

Belongs to the ATPase alpha/beta chains family. F-type ATPases have 2 components, CF(1) - the catalytic core - and CF(0) - the membrane proton channel. CF(1) has five subunits: alpha(3), beta(3), gamma(1), delta(1), epsilon(1). CF(0) has four main subunits: a, b, b' and c.

The protein resides in the plastid. Its subcellular location is the chloroplast thylakoid membrane. It carries out the reaction ATP + H2O + 4 H(+)(in) = ADP + phosphate + 5 H(+)(out). Produces ATP from ADP in the presence of a proton gradient across the membrane. The alpha chain is a regulatory subunit. The chain is ATP synthase subunit alpha, chloroplastic from Chlorokybus atmophyticus (Soil alga).